The following is a 299-amino-acid chain: 4-hydroxy-tetrahydrodipicolinate synthase (299 aa).

Position 51 (Thr51) interacts with pyruvate. Tyr139 (proton donor/acceptor) is an active-site residue. Lys167 serves as the catalytic Schiff-base intermediate with substrate. Ile209 contacts pyruvate.

The protein belongs to the DapA family. As to quaternary structure, homotetramer; dimer of dimers.

It localises to the cytoplasm. It carries out the reaction L-aspartate 4-semialdehyde + pyruvate = (2S,4S)-4-hydroxy-2,3,4,5-tetrahydrodipicolinate + H2O + H(+). Its pathway is amino-acid biosynthesis; L-lysine biosynthesis via DAP pathway; (S)-tetrahydrodipicolinate from L-aspartate: step 3/4. Functionally, catalyzes the condensation of (S)-aspartate-beta-semialdehyde [(S)-ASA] and pyruvate to 4-hydroxy-tetrahydrodipicolinate (HTPA). The protein is 4-hydroxy-tetrahydrodipicolinate synthase of Methylobacterium radiotolerans (strain ATCC 27329 / DSM 1819 / JCM 2831 / NBRC 15690 / NCIMB 10815 / 0-1).